The primary structure comprises 70 residues: Large ribosomal subunit protein bL31 (70 aa).

Lys-8 is subject to N6-acetyllysine. Zn(2+) is bound by residues Cys-16, Cys-18, Cys-37, and Cys-40.

Belongs to the bacterial ribosomal protein bL31 family. Type A subfamily. In terms of assembly, part of the 50S ribosomal subunit. It depends on Zn(2+) as a cofactor.

Binds the 23S rRNA. This is Large ribosomal subunit protein bL31 from Shigella flexneri.